A 132-amino-acid chain; its full sequence is Small ribosomal subunit protein uS8 (132 aa).

Belongs to the universal ribosomal protein uS8 family. As to quaternary structure, part of the 30S ribosomal subunit. Contacts proteins S5 and S12.

Its function is as follows. One of the primary rRNA binding proteins, it binds directly to 16S rRNA central domain where it helps coordinate assembly of the platform of the 30S subunit. The sequence is that of Small ribosomal subunit protein uS8 from Streptococcus suis (strain 98HAH33).